The following is a 254-amino-acid chain: tRNA (guanine-N(1)-)-methyltransferase (254 aa).

S-adenosyl-L-methionine is bound by residues glycine 112 and 131–136 (IGDYIL).

This sequence belongs to the RNA methyltransferase TrmD family. In terms of assembly, homodimer.

Its subcellular location is the cytoplasm. The enzyme catalyses guanosine(37) in tRNA + S-adenosyl-L-methionine = N(1)-methylguanosine(37) in tRNA + S-adenosyl-L-homocysteine + H(+). Specifically methylates guanosine-37 in various tRNAs. This chain is tRNA (guanine-N(1)-)-methyltransferase, found in Sulfurihydrogenibium sp. (strain YO3AOP1).